The primary structure comprises 436 residues: 3-ketoacyl-CoA thiolase (436 aa).

Cys99 serves as the catalytic Acyl-thioester intermediate. Catalysis depends on proton acceptor residues His392 and Cys422.

It belongs to the thiolase-like superfamily. Thiolase family. As to quaternary structure, heterotetramer of two alpha chains (FadJ) and two beta chains (FadI).

The protein resides in the cytoplasm. The catalysed reaction is an acyl-CoA + acetyl-CoA = a 3-oxoacyl-CoA + CoA. The protein operates within lipid metabolism; fatty acid beta-oxidation. Catalyzes the final step of fatty acid oxidation in which acetyl-CoA is released and the CoA ester of a fatty acid two carbons shorter is formed. This is 3-ketoacyl-CoA thiolase from Citrobacter koseri (strain ATCC BAA-895 / CDC 4225-83 / SGSC4696).